The sequence spans 525 residues: MEWKNLDKCTSFTQLQKAHKEQAENLKLADIFDTENSVKRVKNYSVKMGGNLKYNYAAKPVNDEILKALQSLADEQKLIEKYELLLNGDFINTGENRMVLHQLTRGQLKNDVVYKGVNMRSFYLNELKKIKEFSEAVHSGKIKTSQGKVFTDVVQIGIGGSDLGPRAMYIALKNRAKKKMRAHFISNVDPDDAAEVLNSINLASTLFILVSKSGTTQETLANERFVKSVLEKNGLDCKKQMLAVTSETSPLANNPDYLTSFYMDDFIGGRYSSTSVCGAAVLALAFGMETVEAFLKGAAEGDKLSLNKNIKENASLLDALLGVYERNILGCSATAILPYSQALSRFPAHLQQLDMESNGKTVNRFGEKVSYKTGPVIFGEPGTNGQHSFYQLLHQGSDIIPLQFIGFKKSQIGLDIESEGSTNMQKLNANLAAQIMAFAAGKTDENKNKDFAGNRPASLIYGEELNPENLGALLAHYENKVMFQGFIWNLNSFDQEGVQLGKTLAKKVLSNDMPPALKAFSEFLL.

Residue Glu-356 is the Proton donor of the active site. Residues His-387 and Lys-502 contribute to the active site.

It belongs to the GPI family.

The protein localises to the cytoplasm. It carries out the reaction alpha-D-glucose 6-phosphate = beta-D-fructose 6-phosphate. It participates in carbohydrate biosynthesis; gluconeogenesis. The protein operates within carbohydrate degradation; glycolysis; D-glyceraldehyde 3-phosphate and glycerone phosphate from D-glucose: step 2/4. In terms of biological role, catalyzes the reversible isomerization of glucose-6-phosphate to fructose-6-phosphate. The sequence is that of Glucose-6-phosphate isomerase from Treponema denticola (strain ATCC 35405 / DSM 14222 / CIP 103919 / JCM 8153 / KCTC 15104).